A 641-amino-acid chain; its full sequence is Probable serine protease FE772_23065 (641 aa).

The helical transmembrane segment at 532–552 threads the bilayer; that stretch reads WVELIAILAAAGWIRVMLIGL.

This sequence belongs to the peptidase S1 family.

It is found in the cell inner membrane. In terms of biological role, possibly a dedicated protease for substrate gasdermin bGSDM; cleaves the bGSDM precursor, releasing the pore-forming moiety, which integrates into the membrane and triggers cell death. Involved in defense against bacteriophages. When this probable 4 gene operon (bGSDM-FE772_23060-FE772_23065-FE772_23070) is inserted into E.coli it provides nearly 100-fold protection against phages T5 and T6 and about 8-fold against phage T4. The operon without bGSDM no longer protects against phage. The protein is Probable serine protease FE772_23065 of Lysobacter enzymogenes.